The following is a 251-amino-acid chain: Ubiquinone/menaquinone biosynthesis C-methyltransferase UbiE (251 aa).

S-adenosyl-L-methionine-binding positions include T74, D95, 123 to 124 (NA), and S140.

The protein belongs to the class I-like SAM-binding methyltransferase superfamily. MenG/UbiE family.

The catalysed reaction is a 2-demethylmenaquinol + S-adenosyl-L-methionine = a menaquinol + S-adenosyl-L-homocysteine + H(+). The enzyme catalyses a 2-methoxy-6-(all-trans-polyprenyl)benzene-1,4-diol + S-adenosyl-L-methionine = a 5-methoxy-2-methyl-3-(all-trans-polyprenyl)benzene-1,4-diol + S-adenosyl-L-homocysteine + H(+). It participates in quinol/quinone metabolism; menaquinone biosynthesis; menaquinol from 1,4-dihydroxy-2-naphthoate: step 2/2. Its pathway is cofactor biosynthesis; ubiquinone biosynthesis. In terms of biological role, methyltransferase required for the conversion of demethylmenaquinol (DMKH2) to menaquinol (MKH2) and the conversion of 2-polyprenyl-6-methoxy-1,4-benzoquinol (DDMQH2) to 2-polyprenyl-3-methyl-6-methoxy-1,4-benzoquinol (DMQH2). The protein is Ubiquinone/menaquinone biosynthesis C-methyltransferase UbiE of Pectobacterium atrosepticum (strain SCRI 1043 / ATCC BAA-672) (Erwinia carotovora subsp. atroseptica).